A 250-amino-acid polypeptide reads, in one-letter code: Small ribosomal subunit protein uS2 (250 aa).

The interval 225 to 250 (GAQGGRQARGEDLGAAVEAPSEDALA) is disordered.

Belongs to the universal ribosomal protein uS2 family.

The protein is Small ribosomal subunit protein uS2 of Rhizorhabdus wittichii (strain DSM 6014 / CCUG 31198 / JCM 15750 / NBRC 105917 / EY 4224 / RW1) (Sphingomonas wittichii).